We begin with the raw amino-acid sequence, 168 residues long: tRNA (cytidine(56)-2'-O)-methyltransferase (168 aa).

Residues Leu-79 and 104–108 each bind S-adenosyl-L-methionine; that span reads GAEKV.

The protein belongs to the aTrm56 family. Homodimer.

The protein localises to the cytoplasm. It catalyses the reaction cytidine(56) in tRNA + S-adenosyl-L-methionine = 2'-O-methylcytidine(56) in tRNA + S-adenosyl-L-homocysteine + H(+). In terms of biological role, specifically catalyzes the AdoMet-dependent 2'-O-ribose methylation of cytidine at position 56 in tRNAs. In Archaeoglobus fulgidus (strain ATCC 49558 / DSM 4304 / JCM 9628 / NBRC 100126 / VC-16), this protein is tRNA (cytidine(56)-2'-O)-methyltransferase.